A 54-amino-acid chain; its full sequence is Large ribosomal subunit protein bL33A (54 aa).

Belongs to the bacterial ribosomal protein bL33 family.

This Streptomyces avermitilis (strain ATCC 31267 / DSM 46492 / JCM 5070 / NBRC 14893 / NCIMB 12804 / NRRL 8165 / MA-4680) protein is Large ribosomal subunit protein bL33A.